Reading from the N-terminus, the 93-residue chain is Mitochondrial import inner membrane translocase subunit Tim10-A (93 aa).

Positions 32–57 match the Twin CX3C motif motif; the sequence is CHKKCVPPHYKEAELSKGESVCLDRC. Disulfide bonds link C32/C57 and C36/C53.

Belongs to the small Tim family. Heterohexamer; composed of 3 copies of TIMM9 and 3 copies of TIMM10/TIM10A, named soluble 70 kDa complex. The complex forms a 6-bladed alpha-propeller structure and associates with the TIMM22 component of the TIM22 complex. Interacts with multi-pass transmembrane proteins in transit.

The protein resides in the mitochondrion inner membrane. In terms of biological role, mitochondrial intermembrane chaperone that participates in the import and insertion of multi-pass transmembrane proteins into the mitochondrial inner membrane. May also be required for the transfer of beta-barrel precursors from the TOM complex to the sorting and assembly machinery (SAM complex) of the outer membrane. Acts as a chaperone-like protein that protects the hydrophobic precursors from aggregation and guide them through the mitochondrial intermembrane space. In Xenopus laevis (African clawed frog), this protein is Mitochondrial import inner membrane translocase subunit Tim10-A (timm10-a).